We begin with the raw amino-acid sequence, 382 residues long: Alanine racemase 1 (382 aa).

Residue Lys39 is the Proton acceptor; specific for D-alanine of the active site. An N6-(pyridoxal phosphate)lysine modification is found at Lys39. Substrate is bound at residue Arg138. Tyr265 serves as the catalytic Proton acceptor; specific for L-alanine. Residue Met312 coordinates substrate.

It belongs to the alanine racemase family. Pyridoxal 5'-phosphate is required as a cofactor.

The catalysed reaction is L-alanine = D-alanine. It functions in the pathway amino-acid biosynthesis; D-alanine biosynthesis; D-alanine from L-alanine: step 1/1. Catalyzes the interconversion of L-alanine and D-alanine. May also act on other amino acids. The protein is Alanine racemase 1 (alr1) of Staphylococcus aureus (strain N315).